A 320-amino-acid chain; its full sequence is Methionyl-tRNA formyltransferase (320 aa).

Position 114–117 (Ser114–Pro117) interacts with (6S)-5,6,7,8-tetrahydrofolate.

It belongs to the Fmt family.

It catalyses the reaction L-methionyl-tRNA(fMet) + (6R)-10-formyltetrahydrofolate = N-formyl-L-methionyl-tRNA(fMet) + (6S)-5,6,7,8-tetrahydrofolate + H(+). Functionally, attaches a formyl group to the free amino group of methionyl-tRNA(fMet). The formyl group appears to play a dual role in the initiator identity of N-formylmethionyl-tRNA by promoting its recognition by IF2 and preventing the misappropriation of this tRNA by the elongation apparatus. The sequence is that of Methionyl-tRNA formyltransferase from Acinetobacter baumannii (strain AB307-0294).